The sequence spans 30 residues: APRSMRRSSDCFGSRIDRIGAQSGMGCGRF.

The propeptide occupies 1 to 3; sequence APR. Cysteine 11 and cysteine 27 form a disulfide bridge.

The protein belongs to the natriuretic peptide family. Post-translationally, cleaved upon secretion to produce the functional hormone.

It localises to the secreted. In terms of biological role, hormone playing a key role in cardiovascular homeostasis through regulation of natriuresis, diuresis, and vasodilation. Has a cGMP-stimulating activity. The chain is Natriuretic peptides A from Pelophylax ridibundus (Marsh frog).